The chain runs to 316 residues: PHD finger protein 20-like protein 1 (316 aa).

In terms of domain architecture, Tudor 1 spans 11-71; sequence ITFEIGARLE…SNRLRPLERP (61 aa). Residues K75 and K79 each participate in a glycyl lysine isopeptide (Lys-Gly) (interchain with G-Cter in SUMO2) cross-link. One can recognise a Tudor 2 domain in the interval 85 to 141; the sequence is FDFKAGEEVLARWTDCRYYPAKIEAINKEGTFTVQFYDGVIRCLKRMHIKAMPEDAK. Residues 183–237 form a disordered region; sequence AKNKTGNKPRTSANSNKDKEKDERKWFKVPSKKEETSTSITTPEVEKKEDLPTSS. Positions 186-197 are enriched in polar residues; it reads KTGNKPRTSANS. The span at 198–218 shows a compositional bias: basic and acidic residues; it reads NKDKEKDERKWFKVPSKKEET.

As to quaternary structure, interacts with methylated DNMT1 (DNMT1K142me1). Interacts with SOX2.

The protein localises to the nucleus. In terms of biological role, is a negative regulator of proteasomal degradation of a set of methylated proteins, including DNMT1 and SOX2. Involved in the maintainance of embryonic stem cells pluripotency, through the regulation of SOX2 levels. The polypeptide is PHD finger protein 20-like protein 1 (PHF20L1) (Bos taurus (Bovine)).